The following is a 486-amino-acid chain: Glutamyl-tRNA(Gln) amidotransferase subunit A (486 aa).

Active-site charge relay system residues include Lys75 and Ser150. Ser174 serves as the catalytic Acyl-ester intermediate.

This sequence belongs to the amidase family. GatA subfamily. Heterotrimer of A, B and C subunits.

It carries out the reaction L-glutamyl-tRNA(Gln) + L-glutamine + ATP + H2O = L-glutaminyl-tRNA(Gln) + L-glutamate + ADP + phosphate + H(+). Its function is as follows. Allows the formation of correctly charged Gln-tRNA(Gln) through the transamidation of misacylated Glu-tRNA(Gln) in organisms which lack glutaminyl-tRNA synthetase. The reaction takes place in the presence of glutamine and ATP through an activated gamma-phospho-Glu-tRNA(Gln). The polypeptide is Glutamyl-tRNA(Gln) amidotransferase subunit A (Nostoc sp. (strain PCC 7120 / SAG 25.82 / UTEX 2576)).